A 336-amino-acid chain; its full sequence is HTH-type transcriptional repressor PurR (336 aa).

One can recognise an HTH lacI-type domain in the interval 2-56; that stretch reads ATIKDVARLAGVSTTTVSHVINKTRFVAETTQEKVMEAVKQLNYAPSAVARSLKC. The H-T-H motif DNA-binding region spans 4-23; the sequence is IKDVARLAGVSTTTVSHVIN. Residues 48 to 56 mediate DNA binding; sequence SAVARSLKC. Residues Phe-73, Lys-189, Phe-220, and Asp-274 each contribute to the hypoxanthine site.

As to quaternary structure, homodimer.

It functions in the pathway purine metabolism; purine nucleotide biosynthesis [regulation]. Functionally, is the main repressor of the genes involved in the de novo synthesis of purine nucleotides, regulating purB, purC, purEK, purF, purHD, purL, purMN and guaBA expression. PurR is allosterically activated to bind its cognate DNA by binding the purine corepressors, hypoxanthine or guanine, thereby effecting transcription repression. This Vibrio cholerae serotype O1 (strain ATCC 39315 / El Tor Inaba N16961) protein is HTH-type transcriptional repressor PurR.